Reading from the N-terminus, the 238-residue chain is Probable transcriptional regulatory protein YeeN (238 aa).

The protein belongs to the TACO1 family. YeeN subfamily.

The protein localises to the cytoplasm. This Salmonella choleraesuis (strain SC-B67) protein is Probable transcriptional regulatory protein YeeN.